We begin with the raw amino-acid sequence, 127 residues long: Protein ApaG (127 aa).

Residues 3–127 form the ApaG domain; that stretch reads NERKYSIKVE…FILSVPRVLH (125 aa).

The chain is Protein ApaG from Nitrosomonas europaea (strain ATCC 19718 / CIP 103999 / KCTC 2705 / NBRC 14298).